The sequence spans 439 residues: 3beta-hydroxysteroid-dehydrogenase/decarboxylase isoform 1 (439 aa).

Residue 16-21 (GGRGFA) coordinates NAD(+). 2 N-linked (GlcNAc...) asparagine glycosylation sites follow: Asn-75 and Asn-158. Tyr-161 and Lys-165 together coordinate NAD(+). The active-site Proton donor is the Lys-165. The N-linked (GlcNAc...) asparagine glycan is linked to Asn-327. The Reticulon; atypical domain maps to 371–439 (VTETIQWKKQ…MKVFGSKKID (69 aa)). The next 2 membrane-spanning stretches (helical) occupy residues 381-401 (TLIA…TTGS) and 405-425 (IITA…INGI).

The protein belongs to the 3-beta-HSD family.

The protein localises to the endoplasmic reticulum membrane. It catalyses the reaction a 3beta-hydroxysteroid-4alpha-carboxylate + NAD(+) = a 3-oxosteroid + CO2 + NADH. It carries out the reaction 4alpha-carboxy-4beta,14alpha-dimethyl-9beta,19-cyclo-5alpha-ergost-24(24(1))-en-3beta-ol + NAD(+) = cycloeucalenone + CO2 + NADH. Its pathway is steroid biosynthesis; zymosterol biosynthesis; zymosterol from lanosterol: step 4/6. Functionally, 3beta-hydroxysteroid-dehydrogenase/decarboxylase involved in sterol synthesis. Catalyzes the formation of 3-oxosteroids from 3beta-hydroxysteroids-4alpha-carboxylate. Involved in the regulation of inflorescence internodes and leaves growth, probably by affecting auxin transporter activity possibly by altering sterol composition in the membranes. The chain is 3beta-hydroxysteroid-dehydrogenase/decarboxylase isoform 1 from Arabidopsis thaliana (Mouse-ear cress).